A 277-amino-acid polypeptide reads, in one-letter code: Ribosome-inactivating protein luffin-alpha (277 aa).

The N-terminal stretch at 1 to 19 is a signal peptide; it reads MKRFTVLILAIFVAASTVE. Glu-179 is an active-site residue.

This sequence belongs to the ribosome-inactivating protein family. Type 1 RIP subfamily.

It catalyses the reaction Endohydrolysis of the N-glycosidic bond at one specific adenosine on the 28S rRNA.. The chain is Ribosome-inactivating protein luffin-alpha from Luffa aegyptiaca (Sponge gourd).